The following is a 229-amino-acid chain: Enolase-phosphatase E1 (229 aa).

The protein belongs to the HAD-like hydrolase superfamily. MasA/MtnC family. Monomer. It depends on Mg(2+) as a cofactor.

It carries out the reaction 5-methylsulfanyl-2,3-dioxopentyl phosphate + H2O = 1,2-dihydroxy-5-(methylsulfanyl)pent-1-en-3-one + phosphate. The protein operates within amino-acid biosynthesis; L-methionine biosynthesis via salvage pathway; L-methionine from S-methyl-5-thio-alpha-D-ribose 1-phosphate: step 3/6. Its pathway is amino-acid biosynthesis; L-methionine biosynthesis via salvage pathway; L-methionine from S-methyl-5-thio-alpha-D-ribose 1-phosphate: step 4/6. In terms of biological role, bifunctional enzyme that catalyzes the enolization of 2,3-diketo-5-methylthiopentyl-1-phosphate (DK-MTP-1-P) into the intermediate 2-hydroxy-3-keto-5-methylthiopentenyl-1-phosphate (HK-MTPenyl-1-P), which is then dephosphorylated to form the acireductone 1,2-dihydroxy-3-keto-5-methylthiopentene (DHK-MTPene). This is Enolase-phosphatase E1 from Pectobacterium carotovorum subsp. carotovorum (strain PC1).